Reading from the N-terminus, the 385-residue chain is 8-amino-7-oxononanoate synthase (385 aa).

Arginine 21 lines the substrate pocket. 108–109 contributes to the pyridoxal 5'-phosphate binding site; sequence GF. Histidine 133 is a binding site for substrate. The pyridoxal 5'-phosphate site is built by serine 179, histidine 207, and threonine 233. Residue lysine 236 is modified to N6-(pyridoxal phosphate)lysine. Threonine 352 provides a ligand contact to substrate.

Belongs to the class-II pyridoxal-phosphate-dependent aminotransferase family. BioF subfamily. Homodimer. Pyridoxal 5'-phosphate serves as cofactor.

It carries out the reaction 6-carboxyhexanoyl-[ACP] + L-alanine + H(+) = (8S)-8-amino-7-oxononanoate + holo-[ACP] + CO2. Its pathway is cofactor biosynthesis; biotin biosynthesis. In terms of biological role, catalyzes the decarboxylative condensation of pimeloyl-[acyl-carrier protein] and L-alanine to produce 8-amino-7-oxononanoate (AON), [acyl-carrier protein], and carbon dioxide. This is 8-amino-7-oxononanoate synthase from Salmonella arizonae (strain ATCC BAA-731 / CDC346-86 / RSK2980).